The sequence spans 321 residues: GDP-L-fucose synthase (321 aa).

14–20 (GGSGLVG) lines the NADP(+) pocket. Y143 (proton donor/acceptor) is an active-site residue. Residues K147, 170–173 (PTNV), and H186 each bind NADP(+). Residues K194, W208, R215, and D277 each contribute to the substrate site.

The protein belongs to the NAD(P)-dependent epimerase/dehydratase family. Fucose synthase subfamily. In terms of assembly, homodimer.

The catalysed reaction is GDP-beta-L-fucose + NADP(+) = GDP-4-dehydro-alpha-D-rhamnose + NADPH + H(+). It participates in nucleotide-sugar biosynthesis; GDP-L-fucose biosynthesis via de novo pathway; GDP-L-fucose from GDP-alpha-D-mannose: step 2/2. Functionally, catalyzes the two-step NADP-dependent conversion of GDP-4-dehydro-6-deoxy-D-mannose to GDP-fucose, involving an epimerase and a reductase reaction. The sequence is that of GDP-L-fucose synthase from Mus musculus (Mouse).